The chain runs to 130 residues: Small ribosomal subunit protein uS8 (130 aa).

The protein belongs to the universal ribosomal protein uS8 family. Part of the 30S ribosomal subunit. Contacts proteins S5 and S12.

One of the primary rRNA binding proteins, it binds directly to 16S rRNA central domain where it helps coordinate assembly of the platform of the 30S subunit. This is Small ribosomal subunit protein uS8 from Idiomarina loihiensis (strain ATCC BAA-735 / DSM 15497 / L2-TR).